The primary structure comprises 389 residues: Succinate--CoA ligase [ADP-forming] subunit beta (389 aa).

The ATP-grasp domain occupies Lys-9–Glu-244. ATP-binding positions include Lys-46, Gly-53–Gly-55, Glu-99, Ala-102, and Glu-107. Residues Asn-199 and Asp-213 each contribute to the Mg(2+) site. Substrate contacts are provided by residues Asn-264 and Gly-321–Val-323.

The protein belongs to the succinate/malate CoA ligase beta subunit family. In terms of assembly, heterotetramer of two alpha and two beta subunits. Requires Mg(2+) as cofactor.

The catalysed reaction is succinate + ATP + CoA = succinyl-CoA + ADP + phosphate. It carries out the reaction GTP + succinate + CoA = succinyl-CoA + GDP + phosphate. It participates in carbohydrate metabolism; tricarboxylic acid cycle; succinate from succinyl-CoA (ligase route): step 1/1. Functionally, succinyl-CoA synthetase functions in the citric acid cycle (TCA), coupling the hydrolysis of succinyl-CoA to the synthesis of either ATP or GTP and thus represents the only step of substrate-level phosphorylation in the TCA. The beta subunit provides nucleotide specificity of the enzyme and binds the substrate succinate, while the binding sites for coenzyme A and phosphate are found in the alpha subunit. This chain is Succinate--CoA ligase [ADP-forming] subunit beta, found in Histophilus somni (strain 2336) (Haemophilus somnus).